We begin with the raw amino-acid sequence, 200 residues long: Cytochrome c biogenesis ATP-binding export protein CcmA (200 aa).

Positions 3–199 constitute an ABC transporter domain; it reads LSGRRVICVR…DSRELRIGGV (197 aa). An ATP-binding site is contributed by 35-42; the sequence is GRNGSGKT.

This sequence belongs to the ABC transporter superfamily. CcmA exporter (TC 3.A.1.107) family. The complex is composed of two ATP-binding proteins (CcmA) and two transmembrane proteins (CcmB).

It localises to the cell inner membrane. It carries out the reaction heme b(in) + ATP + H2O = heme b(out) + ADP + phosphate + H(+). Its function is as follows. Part of the ABC transporter complex CcmAB involved in the biogenesis of c-type cytochromes; once thought to export heme, this seems not to be the case, but its exact role is uncertain. Responsible for energy coupling to the transport system. In Bradyrhizobium diazoefficiens (strain JCM 10833 / BCRC 13528 / IAM 13628 / NBRC 14792 / USDA 110), this protein is Cytochrome c biogenesis ATP-binding export protein CcmA.